We begin with the raw amino-acid sequence, 412 residues long: Putative competence-damage inducible protein (412 aa).

The protein belongs to the CinA family.

This Bacillus cereus (strain ZK / E33L) protein is Putative competence-damage inducible protein.